A 447-amino-acid polypeptide reads, in one-letter code: DNA primase DnaG (447 aa).

The 75-residue stretch at 200–274 folds into the Toprim domain; that stretch reads DSIIVVEGRA…DIDYVARAPE (75 aa). Residues E206, D248, and D250 each coordinate Mg(2+).

The protein belongs to the archaeal DnaG primase family. In terms of assembly, forms a ternary complex with MCM helicase and DNA. Component of the archaeal exosome complex. Mg(2+) serves as cofactor.

The enzyme catalyses ssDNA + n NTP = ssDNA/pppN(pN)n-1 hybrid + (n-1) diphosphate.. In terms of biological role, RNA polymerase that catalyzes the synthesis of short RNA molecules used as primers for DNA polymerase during DNA replication. Also part of the exosome, which is a complex involved in RNA degradation. Acts as a poly(A)-binding protein that enhances the interaction between heteromeric, adenine-rich transcripts and the exosome. This is DNA primase DnaG from Pyrococcus horikoshii (strain ATCC 700860 / DSM 12428 / JCM 9974 / NBRC 100139 / OT-3).